Consider the following 233-residue polypeptide: Chalcone--flavanone isomerase (233 aa).

Substrate is bound by residues T47, N113, and S192.

It belongs to the chalcone isomerase family.

The enzyme catalyses a chalcone = a flavanone.. Its pathway is secondary metabolite biosynthesis; flavonoid biosynthesis. Functionally, catalyzes the intramolecular cyclization of bicyclic chalcones into tricyclic (S)-flavanones. Responsible for the isomerization of 4,2',4',6'-tetrahydroxychalcone (also termed chalcone) into naringenin. The sequence is that of Chalcone--flavanone isomerase (CHI) from Oryza sativa subsp. japonica (Rice).